Here is a 295-residue protein sequence, read N- to C-terminus: Nucleotide-binding protein llmg_1557 (295 aa).

ATP is bound at residue 12 to 19 (GMSGAGKT). GTP is bound at residue 63–66 (DMRS).

The protein belongs to the RapZ-like family.

Its function is as follows. Displays ATPase and GTPase activities. This chain is Nucleotide-binding protein llmg_1557, found in Lactococcus lactis subsp. cremoris (strain MG1363).